We begin with the raw amino-acid sequence, 502 residues long: UPF0371 protein CLH_2534 (502 aa).

The protein belongs to the UPF0371 family.

This is UPF0371 protein CLH_2534 from Clostridium botulinum (strain Alaska E43 / Type E3).